The sequence spans 1093 residues: MTPVKVWQERVEIPTYETGPQDIHPMFLENRVYQGSSGAVYPYGVTDTLSEQKTLKSWQAVWLENDYIKVMILPELGGRVHRAWDKVKQRDFVYHNEVIKPALVGLLGPWISGGIEFNWPQHHRPTTFMPVDFTLEAHEDGAQTVWVGETEPMHGLQVMTGFTLRPDRAALEIASRVYNGNATPRHFLWWANPAVKGGEGHQSVFPPDVTAVFDHGKRAVSAFPIATGTYYKVDYSAGVDISRYKNVPVPTSYMAEKSQYDFVGAWCHDEDGGLLHVANHHIAPGKKQWSWGHSEFGQAWDKSLTDNNGPYIELMTGIFADNQPDFTWLDAYEEKRFEQYFLPYHSLGMVQNASRDAVIKLQRSKRGIEWGLYAISPLNGYRLAIREIGKCNALLDDAVALMPATAIQGVLHGINPERLTIELSDADGNIVLSYQEHQPQALPLPDVAKAPLAAQDITSTDEAWFIGQHLEQYHHASRSPFDYYLRGVALDPLDYRCNLALAMLEYNRADFPQAVAYATQALKRAHALNKNPQCGQASLIRASAYERQGQYQQAEEDFWRAVWSGNSKAGGYYGLARLAARNGNFDAGLDFCQQSLRACPTNQEVLCLHNLLLVLSGRQDNARVQREKLLRDYPLNATLWWLNWFDGRSESALAQWRGLCQGRDVNALMTAGQLINWGMPTLAAEMLNALDCQRTLPLYLQASLLPKAERGELVAKAIDVFPQFVRFPNTLEEVAALESIEECWFARHLLACFYYNKRSYNKAIAFWQRCVEMSPEFADGWRGLAIHAWNKQHDYELAARYLDNAYQLAPQDARLLFERDLLDKLSGATPEKRLARLENNLEIALKRDDMTAELLNLWHLTGQADKAADILATRKFHPWEGGEGKVTSQFILNQLLRAWQHLDARQPQQACELLHAALHYPENLSEGRLPGQTDNDIWFWQAICANAQGDETEATRCLRLAATGDRTINIHSYYNDQPVDYLFWQGMALRLLGEQQTAQQLFSEMKQWAQEMAKTSIEADFFAVSQPDLLSLYGDLQQQHKEKCLMVAMLASAGLGEVAQYESARAELTAINPAWPKAALFTTVMPFIFNRVH.

This is an uncharacterized protein from Escherichia coli (strain K12).